Here is a 1087-residue protein sequence, read N- to C-terminus: MEGESTESTHNTKVSDSAYSNSCSNSQSQRSGSSKSRLSGSHSSGSSGYGGKPSTQASSSDMAVKRNKDKSRKKKKAKSPAQATAATTTTIKSLEQTEEPLLVKPNNGSCEQQLELQDAQQLGAPTPSDAHDAHGDKPQLDVDEQQDDPQAEQIQQLETATAATISPDTMSASVTVTIDGCTSMEKTCEWTDRPGRLEAHAACIGKQHVQQQQHDRVKEDSFCCVISMHDGVVLFTTANLNEMLGYPREMWLGRSFIDFVHIKDRATFASQITTGIPIAESRCSQSKDARTTFCVMLRRYRGLASGGFGIIGRPVSYAPFRLGLTFREAPEEVQPDGCTLSNATSMLLVISATPIKSCYKEPDEFLSPKGPKFAIQHTAAGIISHVDTAAVSALGYLPQDLIGRSILDFYHHEDLSDIKDIYEKVVKKGQTVGATFCSKPFRFLIQNGCYILLETEWTSFVNPWSRKLEFVVGHHRVFQGPKQCDVFEMSPNVTPNIPEDEQNRNACIKEDILKMMTETVTRPSDTVKQEVSRRCQALASFMETLMDEVARGDLKLDLPHETELTVSERDSVMLGEISPHHDYYDSKSSTETPPSYNQLNYNENLLRFFNSKPVTAPVDTDPPKMDSSYVSSAREDALSPVHGFEGSGGSGSSGNLTTASNVRMSSVTNTSNTGTGTSGGENSASGSSNPLPVNMTLTEILLNKHNDEMEKCMLKKHRESRGRTGDKTKKSVIEKMPEYSGPGHGQTMKRGGSHSWEGDANKPKQQLTLSAVVVAPTVSVSPAEDSQTTAKWQAPMTGSHLFQSSYNFPQSINLWPPFSLGLTTPTVHTTHTSMAQKSFSPQHNLFPAFYYIPAPLATATAGSAAAQTSVSSASAAQHSPKSSENPSTSQPEATAATAMPMPYMAGVMYPHPSLFYAYQPMPFPSVSGAVQMSVQSSGSQSNNNNKSIYTMAPASTTTQKPGAFHSITPAELNKPDAPDTLLHTETSPKISVQEAPKKELSDLPSTSARRGSSSDQRNNSNNPKKYTDSNGNSDDMDGSSFSSFYSSFIKTTDGSESPPDNEKETKVHKLKPIVEHPEEDQTQHGDG.

The segment covering 1–14 (MEGESTESTHNTKV) has biased composition (polar residues). Disordered regions lie at residues 1 to 98 (MEGE…EQTE) and 123 to 153 (GAPT…QAEQ). The span at 15–46 (SDSAYSNSCSNSQSQRSGSSKSRLSGSHSSGS) shows a compositional bias: low complexity. The Nuclear localization signal motif lies at 65-78 (KRNKDKSRKKKKAK). A compositionally biased stretch (basic residues) spans 65–78 (KRNKDKSRKKKKAK). The segment covering 79 to 93 (SPAQATAATTTTIKS) has biased composition (low complexity). The span at 129-140 (DAHDAHGDKPQL) shows a compositional bias: basic and acidic residues. Positions 141 to 150 (DVDEQQDDPQ) are enriched in acidic residues. 2 consecutive PAS domains span residues 220-355 (DSFC…ATPI) and 373-479 (FAIQ…RVFQ). Disordered regions lie at residues 613–692 (PVTA…NPLP), 736–759 (MPEY…WEGD), 871–893 (SSAS…QPEA), and 956–1087 (TTTQ…HGDG). Positions 655–664 (NLTTASNVRM) are enriched in polar residues. The segment covering 665-689 (SSVTNTSNTGTGTSGGENSASGSSN) has biased composition (low complexity). 2 stretches are compositionally biased toward polar residues: residues 877–892 (QHSP…SQPE) and 1003–1024 (LPST…NNPK). The span at 1028–1047 (DSNGNSDDMDGSSFSSFYSS) shows a compositional bias: low complexity. Positions 1060-1087 (DNEKETKVHKLKPIVEHPEEDQTQHGDG) are enriched in basic and acidic residues.

As to quaternary structure, forms a heterodimer with timeless (TIM); the complex then translocates into the nucleus. In terms of processing, phosphorylated with a circadian rhythmicity, probably by the double-time protein (dbt). Phosphorylation could be implicated in the stability of per monomer and in the formation of heterodimer per-tim.

The protein localises to the nucleus. It is found in the cytoplasm. The protein resides in the perinuclear region. Its function is as follows. Essential for biological clock functions. Determines the period length of circadian and ultradian rhythms; an increase in PER dosage leads to shortened circadian rhythms and a decrease leads to lengthened circadian rhythms. Essential for the circadian rhythmicity of locomotor activity, eclosion behavior, and for the rhythmic component of the male courtship song that originates in the thoracic nervous system. The biological cycle depends on the rhythmic formation and nuclear localization of the TIM-PER complex. Light induces the degradation of TIM, which promotes elimination of PER. Nuclear activity of the heterodimer coordinatively regulates PER and TIM transcription through a negative feedback loop. Behaves as a negative element in circadian transcriptional loop. Does not appear to bind DNA, suggesting indirect transcriptional inhibition. This chain is Period circadian protein (per), found in Drosophila virilis (Fruit fly).